A 238-amino-acid chain; its full sequence is Ureidoacrylate amidohydrolase RutB (238 aa).

Catalysis depends on Asp35, which acts as the Proton acceptor. Lys144 is a catalytic residue. Cys177 (nucleophile) is an active-site residue.

It belongs to the isochorismatase family. RutB subfamily.

The catalysed reaction is (Z)-3-ureidoacrylate + H2O + H(+) = (Z)-3-aminoacrylate + NH4(+) + CO2. The enzyme catalyses (Z)-3-ureidoacrylate + H2O = (Z)-3-aminoacrylate + carbamate + H(+). It carries out the reaction (Z)-2-methylureidoacrylate + H2O + H(+) = (Z)-2-methylaminoacrylate + NH4(+) + CO2. In terms of biological role, hydrolyzes ureidoacrylate to form aminoacrylate and carbamate. The carbamate hydrolyzes spontaneously, thereby releasing one of the nitrogen atoms of the pyrimidine ring as ammonia and one of its carbon atoms as CO2. The chain is Ureidoacrylate amidohydrolase RutB from Caulobacter vibrioides (strain NA1000 / CB15N) (Caulobacter crescentus).